Reading from the N-terminus, the 570-residue chain is Proline--tRNA ligase (570 aa).

It belongs to the class-II aminoacyl-tRNA synthetase family. ProS type 1 subfamily. As to quaternary structure, homodimer.

The protein resides in the cytoplasm. It catalyses the reaction tRNA(Pro) + L-proline + ATP = L-prolyl-tRNA(Pro) + AMP + diphosphate. Its function is as follows. Catalyzes the attachment of proline to tRNA(Pro) in a two-step reaction: proline is first activated by ATP to form Pro-AMP and then transferred to the acceptor end of tRNA(Pro). As ProRS can inadvertently accommodate and process non-cognate amino acids such as alanine and cysteine, to avoid such errors it has two additional distinct editing activities against alanine. One activity is designated as 'pretransfer' editing and involves the tRNA(Pro)-independent hydrolysis of activated Ala-AMP. The other activity is designated 'posttransfer' editing and involves deacylation of mischarged Ala-tRNA(Pro). The misacylated Cys-tRNA(Pro) is not edited by ProRS. The sequence is that of Proline--tRNA ligase from Neisseria meningitidis serogroup C / serotype 2a (strain ATCC 700532 / DSM 15464 / FAM18).